The sequence spans 691 residues: Putative calcium up-regulated protein I (691 aa).

The 128-residue stretch at 47–174 (SNCYLKEKPQ…NYTSQIWTYN (128 aa)) folds into the Ricin B-type lectin domain.

This sequence belongs to the cup family.

This is Putative calcium up-regulated protein I (cupI) from Dictyostelium discoideum (Social amoeba).